The primary structure comprises 233 residues: MPCCDPYPWIGLNVGRLSSFPLLKYPQVRRWLAPFIVACSLYFLLWIPEDQPSWVSALVKCQPILCLVLFLWAVAPGGSYTWLLQGALTCSAVGDACLIWPEAFFYGMAVFSVAHLLYLWAFGLSPLQPGLLLCTTLASLTYYSFLLLHLEPNMVLPVAAYGLILNTMLWRGLVLGRSAGWGAVLFIFSDGVLAWDTFVYTLPFARLVTMSTYYAAQLLLTLSALRSPGLKTH.

The Cytoplasmic segment spans residues 1 to 30 (MPCCDPYPWIGLNVGRLSSFPLLKYPQVRR). A helical membrane pass occupies residues 31 to 47 (WLAPFIVACSLYFLLWI). Over 48–53 (PEDQPS) the chain is Extracellular. The chain crosses the membrane as a helical span at residues 54-75 (WVSALVKCQPILCLVLFLWAVA). Residues 76–81 (PGGSYT) lie on the Cytoplasmic side of the membrane. The chain crosses the membrane as a helical span at residues 82–100 (WLLQGALTCSAVGDACLIW). Over 101-106 (PEAFFY) the chain is Extracellular. Residues 107–124 (GMAVFSVAHLLYLWAFGL) traverse the membrane as a helical segment. The Cytoplasmic portion of the chain corresponds to 125 to 130 (SPLQPG). A helical transmembrane segment spans residues 131–147 (LLLCTTLASLTYYSFLL). Topologically, residues 148 to 153 (LHLEPN) are extracellular. The chain crosses the membrane as a helical span at residues 154–170 (MVLPVAAYGLILNTMLW). Over 171–178 (RGLVLGRS) the chain is Cytoplasmic. Residues 179–195 (AGWGAVLFIFSDGVLAW) form a helical membrane-spanning segment. Residues 196–206 (DTFVYTLPFAR) lie on the Extracellular side of the membrane. A helical transmembrane segment spans residues 207–225 (LVTMSTYYAAQLLLTLSAL). Residues 226 to 233 (RSPGLKTH) are Cytoplasmic-facing.

Belongs to the TMEM86 family. As to quaternary structure, homodimer.

Its subcellular location is the endoplasmic reticulum membrane. The protein resides in the cytoplasm. It catalyses the reaction a 1-O-(1Z-alkenyl)-sn-glycero-3-phosphocholine + H2O = a 2,3-saturated aldehyde + sn-glycerol 3-phosphocholine. The catalysed reaction is a 1-O-(1Z-alkenyl)-sn-glycero-3-phosphoethanolamine + H2O = a 2,3-saturated aldehyde + sn-glycero-3-phosphoethanolamine. Competitively inhibited by lysophosphatidic acid. Its function is as follows. Catalyzes the hydrolysis of the vinyl ether bond of choline or ethanolamine lysoplasmalogens, forming fatty aldehyde and glycerophosphocholine or glycerophosphoethanolamine, respectively and is specific for the sn-2-deacylated (lyso) form of plasmalogen. This is Lysoplasmalogenase TMEM86B (Tmem86b) from Rattus norvegicus (Rat).